The chain runs to 29 residues: Tail virion protein G7P (29 aa).

A helical membrane pass occupies residues 8 to 28; the sequence is VVIALGLVISFGLGAITAGVL.

Belongs to the inovirus G7P protein family.

It localises to the virion. Its subcellular location is the host membrane. In terms of biological role, may initiate with G9P the virion concomitant assembly-budding process, by interacting with the packaging signal of the viral genome. The assembly-budding takes place at the host inner membrane. In turn, G7P and G9P are present at the end of the filamentous virion that emerges first from the bacterial host. The sequence is that of Tail virion protein G7P (VII) from Escherichia coli (Bacteriophage I2-2).